A 284-amino-acid polypeptide reads, in one-letter code: Putative mitochondrial carrier protein PET8 (284 aa).

3 Solcar repeats span residues 2–75 (NTFF…MKVK), 92–178 (IDTT…LKKT), and 192–271 (KGAI…VHSL). The next 6 membrane-spanning stretches (helical) occupy residues 5–25 (FLSLLSGAAAGTSTDLVFFPI), 50–70 (GLGSAVVASAPGASLFFISYD), 98–118 (MLSSSIGEICACLVRVPAEVV), 153–169 (GWSTTIMREIPFTCIQF), 194–214 (AICGSIAGGIAAATTTPLDFL), and 252–272 (MWISAGGAIFLGMYETVHSLL).

Belongs to the mitochondrial carrier (TC 2.A.29) family.

It localises to the mitochondrion inner membrane. In Saccharomyces cerevisiae (strain ATCC 204508 / S288c) (Baker's yeast), this protein is Putative mitochondrial carrier protein PET8 (PET8).